Here is a 181-residue protein sequence, read N- to C-terminus: TATA-box-binding protein (181 aa).

2 tandem repeats follow at residues Ile-7–Leu-83 and Val-98–Leu-173.

It belongs to the TBP family.

In terms of biological role, general factor that plays a role in the activation of archaeal genes transcribed by RNA polymerase. Binds specifically to the TATA box promoter element which lies close to the position of transcription initiation. This is TATA-box-binding protein from Methanococcus maripaludis (strain C6 / ATCC BAA-1332).